Here is a 130-residue protein sequence, read N- to C-terminus: Small ribosomal subunit protein uS9 (130 aa).

The segment at 99–130 (KRAGLLTRDPRMKERKKPGLKAARRSPQFSKR) is disordered. Residues 111–130 (KERKKPGLKAARRSPQFSKR) are compositionally biased toward basic residues.

The protein belongs to the universal ribosomal protein uS9 family.

The chain is Small ribosomal subunit protein uS9 from Staphylococcus aureus (strain Mu3 / ATCC 700698).